We begin with the raw amino-acid sequence, 318 residues long: Malate dehydrogenase (318 aa).

NAD(+)-binding positions include 10–15 (GAGNIG) and Asp34. Substrate contacts are provided by Arg83 and Arg89. Residues Asn96 and 119-121 (ITN) contribute to the NAD(+) site. The substrate site is built by Asn121 and Arg152. His176 acts as the Proton acceptor in catalysis.

The protein belongs to the LDH/MDH superfamily. MDH type 3 family.

It catalyses the reaction (S)-malate + NAD(+) = oxaloacetate + NADH + H(+). In terms of biological role, catalyzes the reversible oxidation of malate to oxaloacetate. The protein is Malate dehydrogenase of Rhodospirillum rubrum (strain ATCC 11170 / ATH 1.1.1 / DSM 467 / LMG 4362 / NCIMB 8255 / S1).